The following is a 420-amino-acid chain: Serine hydroxymethyltransferase (420 aa).

Residues L123 and 127–129 (GHL) contribute to the (6S)-5,6,7,8-tetrahydrofolate site. K232 bears the N6-(pyridoxal phosphate)lysine mark.

It belongs to the SHMT family. Homodimer. Pyridoxal 5'-phosphate serves as cofactor.

It is found in the cytoplasm. The catalysed reaction is (6R)-5,10-methylene-5,6,7,8-tetrahydrofolate + glycine + H2O = (6S)-5,6,7,8-tetrahydrofolate + L-serine. The protein operates within one-carbon metabolism; tetrahydrofolate interconversion. It functions in the pathway amino-acid biosynthesis; glycine biosynthesis; glycine from L-serine: step 1/1. Functionally, catalyzes the reversible interconversion of serine and glycine with tetrahydrofolate (THF) serving as the one-carbon carrier. This reaction serves as the major source of one-carbon groups required for the biosynthesis of purines, thymidylate, methionine, and other important biomolecules. Also exhibits THF-independent aldolase activity toward beta-hydroxyamino acids, producing glycine and aldehydes, via a retro-aldol mechanism. The polypeptide is Serine hydroxymethyltransferase (Ehrlichia chaffeensis (strain ATCC CRL-10679 / Arkansas)).